The chain runs to 645 residues: DEAD-box ATP-dependent RNA helicase 46 (645 aa).

2 disordered regions span residues 1 to 22 (MAATASAIRYAPEDPNLPKPWK) and 44 to 137 (YERP…AGNE). Residues 15 to 49 (PNLPKPWKGLVDSRTGYLYFWNPETNVTQYERPAS) enclose the WW domain. The span at 60-72 (VSSSVQTNQQSSS) shows a compositional bias: low complexity. A compositionally biased stretch (basic and acidic residues) spans 77–91 (GKEDDKYGRGSDGPK). Positions 108-136 (SSNDAASGLGNASSGGSSARGPPSSAAGN) are enriched in low complexity. The Q motif signature appears at 161 to 189 (MSFEATGLPNELLREVYSAGFSAPSPIQA). One can recognise a Helicase ATP-binding domain in the interval 192-366 (WPIAMQNRDI…ADLLVNPAQV (175 aa)). 205–212 (AKTGSGKT) provides a ligand contact to ATP. A DEAD box motif is present at residues 314–317 (DEAD). The Helicase C-terminal domain occupies 395–539 (RLEQILRSQE…KVPPQVREMA (145 aa)). Positions 532–645 (PPQVREMATR…FHEAMMMKNR (114 aa)) are disordered. The segment covering 556–597 (SSGGGGGRGGYGDSGYGGRGESGYGSRGDSGYGGRGDSGGRG) has biased composition (gly residues). Over residues 598 to 608 (SWAPSRDSSGS) the composition is skewed to low complexity. The segment covering 612–623 (GRERSRSPERFR) has biased composition (basic and acidic residues). Over residues 624–634 (GGPPSTSSPPR) the composition is skewed to low complexity.

The protein belongs to the DEAD box helicase family. DDX5/DBP2 subfamily.

It carries out the reaction ATP + H2O = ADP + phosphate + H(+). This Arabidopsis thaliana (Mouse-ear cress) protein is DEAD-box ATP-dependent RNA helicase 46 (RH46).